Here is a 327-residue protein sequence, read N- to C-terminus: Tetraacyldisaccharide 4'-kinase (327 aa).

Residue 52–59 (TLGGAGKT) coordinates ATP.

Belongs to the LpxK family.

It carries out the reaction a lipid A disaccharide + ATP = a lipid IVA + ADP + H(+). It participates in glycolipid biosynthesis; lipid IV(A) biosynthesis; lipid IV(A) from (3R)-3-hydroxytetradecanoyl-[acyl-carrier-protein] and UDP-N-acetyl-alpha-D-glucosamine: step 6/6. Functionally, transfers the gamma-phosphate of ATP to the 4'-position of a tetraacyldisaccharide 1-phosphate intermediate (termed DS-1-P) to form tetraacyldisaccharide 1,4'-bis-phosphate (lipid IVA). The protein is Tetraacyldisaccharide 4'-kinase of Methylorubrum extorquens (strain PA1) (Methylobacterium extorquens).